Here is a 442-residue protein sequence, read N- to C-terminus: D-aminoacyl-tRNA deacylase (442 aa).

Belongs to the DtdA deacylase family. As to quaternary structure, monomer. The cofactor is Zn(2+).

It carries out the reaction a D-aminoacyl-tRNA + H2O = a tRNA + a D-alpha-amino acid + H(+). The catalysed reaction is glycyl-tRNA(Ala) + H2O = tRNA(Ala) + glycine + H(+). In terms of biological role, D-aminoacyl-tRNA deacylase with broad substrate specificity. By recycling D-aminoacyl-tRNA to D-amino acids and free tRNA molecules, this enzyme counteracts the toxicity associated with the formation of D-aminoacyl-tRNA entities in vivo. The protein is D-aminoacyl-tRNA deacylase of Methanospirillum hungatei JF-1 (strain ATCC 27890 / DSM 864 / NBRC 100397 / JF-1).